Consider the following 602-residue polypeptide: CDPK-related protein kinase (602 aa).

The tract at residues 1–59 (MGICVSKPSPEPDLHNHHTSIPVNDTSLPPQDNSIPPKDIAIPAQDNNKPPGKKSPFLP) is disordered. Polar residues predominate over residues 19-34 (TSIPVNDTSLPPQDNS). Tandem repeats lie at residues 20–26 (SIPVNDT), 27–33 (SLPPQDN), and 34–40 (SIPPKDI). The segment at 20 to 40 (SIPVNDTSLPPQDNSIPPKDI) is 3 X 7 AA tandem repeats of S-[LI]-P-X-X-D-X. One can recognise a Protein kinase domain in the interval 148–410 (FEVGEEVGRG…AAQALCHSWI (263 aa)). ATP contacts are provided by residues 154–162 (VGRGHFGYT) and lysine 180. Aspartate 276 (proton acceptor) is an active-site residue. 4 consecutive EF-hand domains span residues 451-486 (VDEL…RNST), 487-527 (DAMK…LEAL), 528-563 (DRWE…LGPS), and 564-602 (IPVH…AKAQ).

This sequence belongs to the protein kinase superfamily. CAMK Ser/Thr protein kinase family. CaMK subfamily.

The catalysed reaction is L-seryl-[protein] + ATP = O-phospho-L-seryl-[protein] + ADP + H(+). It carries out the reaction L-threonyl-[protein] + ATP = O-phospho-L-threonyl-[protein] + ADP + H(+). This Daucus carota (Wild carrot) protein is CDPK-related protein kinase (CRK).